Here is a 446-residue protein sequence, read N- to C-terminus: Sulfoquinovose isomerase (446 aa).

This sequence belongs to the SqvD family.

It catalyses the reaction 6-sulfo-beta-D-quinovose = 6-deoxy-6-sulfo-D-fructose. Part of the sulfo-TAL (or sulfo-SFT) pathway, a D-sulfoquinovose degradation pathway that produces sulfolactate (SL). Catalyzes the isomerization of sulfoquinovose (SQ) to 6-deoxy-6-sulfo-D-fructose (SF). In Priestia aryabhattai (Bacillus aryabhattai), this protein is Sulfoquinovose isomerase.